Consider the following 114-residue polypeptide: Large ribosomal subunit protein bL19 (114 aa).

Belongs to the bacterial ribosomal protein bL19 family.

This protein is located at the 30S-50S ribosomal subunit interface and may play a role in the structure and function of the aminoacyl-tRNA binding site. The protein is Large ribosomal subunit protein bL19 of Lactococcus lactis subsp. lactis (strain IL1403) (Streptococcus lactis).